Consider the following 189-residue polypeptide: MGLADFKDVDRNELSMIEVAHAILEDRGERMAFADIVNEVQKYLNKSDEEIRQRLPQFYTDMNTDGRFISMGENVWALRTWFKFEAVDEEVDHPEDDGDEESTRKHHKKVNTFLATTEGDDVIDYENDDPEDEDLSDDSDADEDDADDNSGDDYDDNEDDDDDDSLLDGIEDQLSQMDDDDLDDDEDEE.

Residues 14-81 (LSMIEVAHAI…GENVWALRTW (68 aa)) form the HTH HARE-type domain. Composition is skewed to acidic residues over residues 90–100 (EVDHPEDDGDE) and 118–189 (EGDD…EDEE). The disordered stretch occupies residues 90–189 (EVDHPEDDGD…DDLDDDEDEE (100 aa)).

The protein belongs to the RpoE family. In terms of assembly, RNAP is composed of a core of 2 alpha, a beta and a beta' subunits. The core is associated with a delta subunit and one of several sigma factors.

Functionally, participates in both the initiation and recycling phases of transcription. In the presence of the delta subunit, RNAP displays an increased specificity of transcription, a decreased affinity for nucleic acids, and an increased efficiency of RNA synthesis because of enhanced recycling. This Lactobacillus delbrueckii subsp. bulgaricus (strain ATCC BAA-365 / Lb-18) protein is Probable DNA-directed RNA polymerase subunit delta.